The chain runs to 117 residues: Large ribosomal subunit protein eL18 (117 aa).

The protein belongs to the eukaryotic ribosomal protein eL18 family.

The chain is Large ribosomal subunit protein eL18 from Halobacterium salinarum (strain ATCC 29341 / DSM 671 / R1).